Reading from the N-terminus, the 152-residue chain is Transcriptional regulator MraZ (152 aa).

SpoVT-AbrB domains follow at residues 5–52 (ATMV…PLPE) and 81–124 (ASEC…DEQT).

It belongs to the MraZ family. Forms oligomers.

It localises to the cytoplasm. The protein resides in the nucleoid. Negatively regulates its own expression and that of the subsequent genes in the proximal part of the division and cell wall (dcw) gene cluster. Acts by binding directly to DNA. May also regulate the expression of genes outside the dcw cluster. In Yersinia pseudotuberculosis serotype O:1b (strain IP 31758), this protein is Transcriptional regulator MraZ.